We begin with the raw amino-acid sequence, 213 residues long: MEVEKEFITDEAKELLSKDKLIQQAYNEVKTSICSPIWPATSKTFTINNTEKNCNGVVPIKELCYTLLEDTYNWYREKPLDILKLEKKKGGPIDVYKEFIENSELKRVGMEFETGNISSAHRSMNKLLLGLKHGEIDLAIILMPIKQLAYYLTDRVTNFEELEPYFELTEGQPFIFIGFNAEAYNSNVPLIPKGSDGMSKRSIKKWKDKVENK.

Mg(2+) contacts are provided by glutamate 77, aspartate 94, glutamate 111, and phenylalanine 112. Glutamate 113 serves as the catalytic Proton acceptor.

In terms of assembly, homodimer. It depends on Mg(2+) as a cofactor.

It catalyses the reaction Endonucleolytic cleavage of DNA to give specific double-stranded fragments with terminal 5'-phosphates.. In terms of biological role, a P subtype restriction enzyme that recognizes the double-stranded sequence 5'-GGATCC-3' and cleaves after G-1. In Bacillus amyloliquefaciens (Bacillus velezensis), this protein is Type II restriction enzyme BamHI.